The chain runs to 215 residues: Small ribosomal subunit protein uS3c (215 aa).

Residues 43–116 enclose the KH type-2 domain; the sequence is IKNYIKKNMK…KLNMAITRIA (74 aa).

Belongs to the universal ribosomal protein uS3 family. In terms of assembly, part of the 30S ribosomal subunit.

The protein resides in the plastid. Its subcellular location is the chloroplast. This Morus indica (Mulberry) protein is Small ribosomal subunit protein uS3c (rps3).